A 334-amino-acid polypeptide reads, in one-letter code: Probable fructose-bisphosphate aldolase class 1 (334 aa).

The protein belongs to the class I fructose-bisphosphate aldolase family.

The enzyme catalyses beta-D-fructose 1,6-bisphosphate = D-glyceraldehyde 3-phosphate + dihydroxyacetone phosphate. It functions in the pathway carbohydrate degradation; glycolysis; D-glyceraldehyde 3-phosphate and glycerone phosphate from D-glucose: step 4/4. In Xylella fastidiosa (strain 9a5c), this protein is Probable fructose-bisphosphate aldolase class 1.